The primary structure comprises 527 residues: Peptide chain release factor 3 (527 aa).

The region spanning 9 to 277 is the tr-type G domain; the sequence is AKRRTFAIIS…AVVDWAPRPL (269 aa). Residues 18 to 25, 86 to 90, and 140 to 143 each bind GTP; these read SHPDAGKT, DTPGH, and NKLD.

Belongs to the TRAFAC class translation factor GTPase superfamily. Classic translation factor GTPase family. PrfC subfamily.

The protein localises to the cytoplasm. Increases the formation of ribosomal termination complexes and stimulates activities of RF-1 and RF-2. It binds guanine nucleotides and has strong preference for UGA stop codons. It may interact directly with the ribosome. The stimulation of RF-1 and RF-2 is significantly reduced by GTP and GDP, but not by GMP. This chain is Peptide chain release factor 3, found in Pseudomonas putida (strain ATCC 47054 / DSM 6125 / CFBP 8728 / NCIMB 11950 / KT2440).